The primary structure comprises 122 residues: Large ribosomal subunit protein uL14 (122 aa).

Belongs to the universal ribosomal protein uL14 family. In terms of assembly, part of the 50S ribosomal subunit. Forms a cluster with proteins L3 and L19. In the 70S ribosome, L14 and L19 interact and together make contacts with the 16S rRNA in bridges B5 and B8.

Binds to 23S rRNA. Forms part of two intersubunit bridges in the 70S ribosome. The sequence is that of Large ribosomal subunit protein uL14 from Xanthomonas axonopodis pv. citri (strain 306).